The sequence spans 35 residues: Phospholipase A2 neuwieditoxin-1 (35 aa).

Ca(2+)-binding residues include Tyr-27, Gly-29, and Gly-31.

Belongs to the phospholipase A2 family. Group II subfamily. D49 sub-subfamily. Dimer. Ca(2+) is required as a cofactor. As to expression, expressed by the venom gland.

It is found in the secreted. The catalysed reaction is a 1,2-diacyl-sn-glycero-3-phosphocholine + H2O = a 1-acyl-sn-glycero-3-phosphocholine + a fatty acid + H(+). Its function is as follows. Snake venom phospholipase A2 (PLA2) that shows presynaptic neurotoxicity. 10 ug/ml of this protein produce complete neuromuscular blockade up to 80 minutes, without inhibiting the responses to acetylcholine (ACh) and potassium chloride (KCl). In addition, it produces a calcium-dependent blockade of acetylcholine release and causes appearance of giant miniature end-plate potentials. PLA2 catalyzes the calcium-dependent hydrolysis of the 2-acyl groups in 3-sn-phosphoglycerides. In Bothrops pauloensis (Neuwied's lancehead), this protein is Phospholipase A2 neuwieditoxin-1.